The primary structure comprises 477 residues: Ribulose bisphosphate carboxylase large chain (477 aa).

A propeptide spanning residues 1-2 (MS) is cleaved from the precursor. Residue Pro-3 is modified to N-acetylproline. Residues Asn-123 and Thr-173 each coordinate substrate. The Proton acceptor role is filled by Lys-175. Position 177 (Lys-177) interacts with substrate. Residues Lys-201, Asp-203, and Glu-204 each coordinate Mg(2+). N6-carboxylysine is present on Lys-201. The Proton acceptor role is filled by His-294. Substrate is bound by residues Arg-295, His-327, and Ser-379.

Belongs to the RuBisCO large chain family. Type I subfamily. As to quaternary structure, heterohexadecamer of 8 large chains and 8 small chains; disulfide-linked. The disulfide link is formed within the large subunit homodimers. It depends on Mg(2+) as a cofactor. The disulfide bond which can form between Cys-247 in the large chain dimeric partners within the hexadecamer appears to be associated with oxidative stress and protein turnover.

The protein localises to the plastid. Its subcellular location is the chloroplast. It catalyses the reaction 2 (2R)-3-phosphoglycerate + 2 H(+) = D-ribulose 1,5-bisphosphate + CO2 + H2O. The catalysed reaction is D-ribulose 1,5-bisphosphate + O2 = 2-phosphoglycolate + (2R)-3-phosphoglycerate + 2 H(+). Functionally, ruBisCO catalyzes two reactions: the carboxylation of D-ribulose 1,5-bisphosphate, the primary event in carbon dioxide fixation, as well as the oxidative fragmentation of the pentose substrate in the photorespiration process. Both reactions occur simultaneously and in competition at the same active site. The chain is Ribulose bisphosphate carboxylase large chain (rbcL) from Triticum aestivum (Wheat).